Here is a 224-residue protein sequence, read N- to C-terminus: 7-cyano-7-deazaguanine synthase (224 aa).

8-18 (VSGGADSATVL) provides a ligand contact to ATP. 4 residues coordinate Zn(2+): C189, C199, C202, and C205.

The protein belongs to the QueC family. Requires Zn(2+) as cofactor.

The enzyme catalyses 7-carboxy-7-deazaguanine + NH4(+) + ATP = 7-cyano-7-deazaguanine + ADP + phosphate + H2O + H(+). Its pathway is purine metabolism; 7-cyano-7-deazaguanine biosynthesis. Functionally, catalyzes the ATP-dependent conversion of 7-carboxy-7-deazaguanine (CDG) to 7-cyano-7-deazaguanine (preQ(0)). The sequence is that of 7-cyano-7-deazaguanine synthase from Rickettsia felis (strain ATCC VR-1525 / URRWXCal2) (Rickettsia azadi).